Here is a 643-residue protein sequence, read N- to C-terminus: Protein disulfide-isomerase A4 (643 aa).

A signal peptide spans 1-20 (MKLRKAWLLVLLLALTQLLA). 2 consecutive Thioredoxin domains span residues 21–167 (AASA…EVSQ) and 167–299 (QPDW…EFLK). Residues 24 to 58 (AEDAHEDASDSENPIEDDDDEEEDEEDEDDLEVKE) form a disordered region. Over residues 32-56 (SDSENPIEDDDDEEEDEEDEDDLEV) the composition is skewed to acidic residues. A CXXC motif is present at residues 89 to 92 (CGHC). Cystine bridges form between cysteine 89-cysteine 92 and cysteine 204-cysteine 207. Residue lysine 364 is modified to N6-acetyllysine. The region spanning 503-634 (FKKGKLKPVI…LSKFIDEHAT (132 aa)) is the Thioredoxin 3 domain. A CXXC motif is present at residues 553-556 (CGHC). A disulfide bridge links cysteine 553 with cysteine 556. The Prevents secretion from ER motif lies at 640 to 643 (KEEL).

Belongs to the protein disulfide isomerase family. As to quaternary structure, part of a large chaperone multiprotein complex comprising DNAJB11, HSP90B1, HSPA5, HYOU, PDIA2, PDIA4, PDIA6, PPIB, SDF2L1, UGGT1 and very small amounts of ERP29, but not, or at very low levels, CALR nor CANX. Component of a complex containing at least CRELD2, MANF, MATN3 and PDIA4. Post-translationally, O-glycosylated.

The protein resides in the endoplasmic reticulum lumen. The protein localises to the melanosome. It carries out the reaction Catalyzes the rearrangement of -S-S- bonds in proteins.. This Rattus norvegicus (Rat) protein is Protein disulfide-isomerase A4 (Pdia4).